Consider the following 558-residue polypeptide: CTP synthase (558 aa).

The segment at 1–266 is amidoligase domain; it reads MSAKYIFVTG…DRLVMKYLRL (266 aa). Ser14 is a CTP binding site. Ser14 contributes to the UTP binding site. ATP-binding positions include 15–20 and Asp72; that span reads SLGKGL. Positions 72 and 140 each coordinate Mg(2+). CTP contacts are provided by residues 147 to 149, 187 to 192, and Lys223; these read DIE and KTKPTQ. Residues 187–192 and Lys223 contribute to the UTP site; that span reads KTKPTQ. 239–241 lines the ATP pocket; it reads KDV. The Glutamine amidotransferase type-1 domain maps to 291–537; the sequence is IIGIIGKYVE…IGASYEHRMK (247 aa). Position 355 (Gly355) interacts with L-glutamine. Cys382 serves as the catalytic Nucleophile; for glutamine hydrolysis. L-glutamine is bound by residues 383 to 386, Glu406, and Arg463; that span reads LGMQ. Active-site residues include His510 and Glu512. Positions 539 to 558 are disordered; that stretch reads THTKEREEESVFLRPERVGK. The span at 542 to 558 shows a compositional bias: basic and acidic residues; the sequence is KEREEESVFLRPERVGK.

Belongs to the CTP synthase family. As to quaternary structure, homotetramer.

It catalyses the reaction UTP + L-glutamine + ATP + H2O = CTP + L-glutamate + ADP + phosphate + 2 H(+). It carries out the reaction L-glutamine + H2O = L-glutamate + NH4(+). The catalysed reaction is UTP + NH4(+) + ATP = CTP + ADP + phosphate + 2 H(+). Its pathway is pyrimidine metabolism; CTP biosynthesis via de novo pathway; CTP from UDP: step 2/2. With respect to regulation, allosterically activated by GTP, when glutamine is the substrate; GTP has no effect on the reaction when ammonia is the substrate. The allosteric effector GTP functions by stabilizing the protein conformation that binds the tetrahedral intermediate(s) formed during glutamine hydrolysis. Inhibited by the product CTP, via allosteric rather than competitive inhibition. In terms of biological role, catalyzes the ATP-dependent amination of UTP to CTP with either L-glutamine or ammonia as the source of nitrogen. Regulates intracellular CTP levels through interactions with the four ribonucleotide triphosphates. The chain is CTP synthase from Koribacter versatilis (strain Ellin345).